A 503-amino-acid polypeptide reads, in one-letter code: ATP synthase subunit alpha (503 aa).

Position 169 to 176 (169 to 176) interacts with ATP; it reads GDRQTGKT.

It belongs to the ATPase alpha/beta chains family. In terms of assembly, F-type ATPases have 2 components, CF(1) - the catalytic core - and CF(0) - the membrane proton channel. CF(1) has five subunits: alpha(3), beta(3), gamma(1), delta(1), epsilon(1). CF(0) has three main subunits: a(1), b(2) and c(9-12). The alpha and beta chains form an alternating ring which encloses part of the gamma chain. CF(1) is attached to CF(0) by a central stalk formed by the gamma and epsilon chains, while a peripheral stalk is formed by the delta and b chains.

Its subcellular location is the cell membrane. The catalysed reaction is ATP + H2O + 4 H(+)(in) = ADP + phosphate + 5 H(+)(out). Functionally, produces ATP from ADP in the presence of a proton gradient across the membrane. The alpha chain is a regulatory subunit. The chain is ATP synthase subunit alpha from Staphylococcus epidermidis (strain ATCC 35984 / DSM 28319 / BCRC 17069 / CCUG 31568 / BM 3577 / RP62A).